The sequence spans 398 residues: Probable aminomethyltransferase (398 aa).

This sequence belongs to the GcvT family. In terms of assembly, the glycine cleavage system is composed of four proteins: P, T, L and H.

The enzyme catalyses N(6)-[(R)-S(8)-aminomethyldihydrolipoyl]-L-lysyl-[protein] + (6S)-5,6,7,8-tetrahydrofolate = N(6)-[(R)-dihydrolipoyl]-L-lysyl-[protein] + (6R)-5,10-methylene-5,6,7,8-tetrahydrofolate + NH4(+). The glycine cleavage system catalyzes the degradation of glycine. The chain is Probable aminomethyltransferase from Pyrococcus horikoshii (strain ATCC 700860 / DSM 12428 / JCM 9974 / NBRC 100139 / OT-3).